The chain runs to 333 residues: Adenosine deaminase (333 aa).

The Zn(2+) site is built by H12 and H14. Substrate-binding residues include H14, D16, and G170. H197 contributes to the Zn(2+) binding site. Residue E200 is the Proton donor of the active site. Position 278 (D278) interacts with Zn(2+). D279 provides a ligand contact to substrate.

This sequence belongs to the metallo-dependent hydrolases superfamily. Adenosine and AMP deaminases family. Adenosine deaminase subfamily. Zn(2+) is required as a cofactor.

The catalysed reaction is adenosine + H2O + H(+) = inosine + NH4(+). It catalyses the reaction 2'-deoxyadenosine + H2O + H(+) = 2'-deoxyinosine + NH4(+). In terms of biological role, catalyzes the hydrolytic deamination of adenosine and 2-deoxyadenosine. The protein is Adenosine deaminase of Salmonella typhi.